We begin with the raw amino-acid sequence, 1848 residues long: MSPQWMPQNIQKRLLLYVLQQLSLFSEIDLPNLEEVSLNNIVLRDISIDPEKVGKLPGCNLRFGQVGTLELNTVTGGTIIGGGGGVNVDARDVEVVISPDFDINEEVRKEVQFSLAQSTADLAKTIIKDSDSAAEDESDDTDEEIVVEPKKSRSSSSSSFSGSTSKPSALSAVMSRAVEMALSRLQIKITNMKIKLVSEMTDLLFEVDEVLINTVNGTRVVKITGVRSMTLKPNVNPGELVEKVVQSPQKDDTSDNEEDDSNYEDDNNDYGDESLMDSMVFTHEEASSIYLSATSQSFPRPTSYNVDEGEVHVGNESVSSDPPAIFHMDYCDVEFDGLSNVSNLKIDIGTIKVATTPLAPTIISILNGITRSLKIKNHQKWTQQALKRQQNSRFPQYAETTDELTDDEASSKDGENTDPFFNKLHIRDIIISTTSALSRDGVFASPDNSINFVLHNSNIKQKNDMLIYGGVETFRIEQVKEGVTTDIFTFESPTAATHAEQSQSQPDSEGVSFAHGSPPPPIRPMSPSSISSMSSSGSKSSTLKADLRFEIFKKLEENVVTIETTALLSKTALLTLDLNSSLILSNFITAMNSIHSNFKVLMATIENLSKQQSPKKQKTHTNAAEAMTTKTQFILQTSPIIMSVKFTQDLLVKAIIFPISYNLQQNQLSISKILINTTIRNERESTTITISNIVLLTKLHEFKSFIKRIANPSNANPIPREVQVTASSNLFISKIMVNIALKELKFVISNIVSFYDSFASLSAKQSNSLENSVLDFVRDRSHKLEISSILQPPGQSRRRIGPGFASPHLSNPTFVNISRNNIASFRCSIKEVELNLVQVLPKFGGLTLRLKDILLYEQKNDINGSILSFDIVRVDDGQLQKFVYEFQELPLESIRLPLIMIHCKNTEKISTVDVVIRNVLVEYYTQWLLLLDDFEANEEKLAELVVEKVKPVNPSSSQNRFDIRFSVFDCIIGLNPGRLPCKSYLVVGRGTSDFTFGVNQFYIKSSFRDVSALLIDDVKNKEKMPLKDNSTSRSRKSLPTSSYTSPLTFFSNLGYIMIGGLNVVHIGITFNTNIEEVMKRNEKLGISDNLSLIDLKINSDEHHLELCADSTHVLLQLINDLKLPLNFKDDEKMKVTVDSSINLMDDLDENQFQLKKRNISVAPGVETSSSSAGSENENLETIAFDEDHFSKARNKIPKGSKVDPFKLNINLSKTKIYLYDGYDWKDTRKAVRGAVKRVEAQAMKERLKKLKKQTDKDDYDEEDEFIEETLFSSIHVGIPRDATDANLTDRINKRVQSSLQETDMTPEEAQKAQINVELGKNYKNLKLRRSRVHKIMADFTNIEVNVSVYSTRDPRKDPTDENLPYELLNDVEVRLGTADVYDNVATSTWNKLLTYMNTSGEGEIGKSMLKLAITNVRPSPKLVSSEAIMKVQVLPVRLHIDQDTLDFLMRFLEFKDSRFSLPLDEIVYIQKFQISPVMLKLDYKPKRVDYVGIRSGNSAEFMNFFILDGSTINLAEATVYGLLGMPSLGKALGEVWGPQIQQTQIAGILAGLAPIRSIVNIGGGVKDLIAIPISEYKKDGRLFRSIQKGTQKFAKTTGYEILNLGVKLASGTQVILEQGEQLLGGEGSGARLPASRGSNSQKCNVNKRSSYKVAAKVDFNKLLANSQVLNQSVRVDRDQYANKKFYSYIDIDEDDDELVTGIDKELLSKSIFLLPRDDNSKKEGEEDEADDSSADEEGEKLISLYSNQPENIQEGMKLAYKSFGNNLKITKRQLINLKNELNESENIQDSLKSILKSSPIIFIRPIIGSTEALSKALMGLGNEIDSKRIVESRDKYRYIKRAKDEDVL.

5 disordered regions span residues 129–168, 237–274, 386–417, 494–540, and 1717–1737; these read DSDS…SKPS, PGEL…GDES, LKRQ…GENT, TAAT…GSKS, and DDNS…ADEE. The span at 132-146 shows a compositional bias: acidic residues; the sequence is SAAEDESDDTDEEIV. The segment covering 154–168 has biased composition (low complexity); the sequence is SSSSSSFSGSTSKPS. Residues 254–274 show a composition bias toward acidic residues; it reads SDNEEDDSNYEDDNNDYGDES. Residues 494-507 are compositionally biased toward polar residues; that stretch reads TAATHAEQSQSQPD. The span at 525 to 540 shows a compositional bias: low complexity; that stretch reads MSPSSISSMSSSGSKS. The segment covering 1725 to 1737 has biased composition (acidic residues); that stretch reads EEDEADDSSADEE.

It belongs to the ATG2 family.

The protein localises to the preautophagosomal structure membrane. The protein resides in the endoplasmic reticulum membrane. It carries out the reaction a 1,2-diacyl-sn-glycero-3-phosphocholine(in) = a 1,2-diacyl-sn-glycero-3-phosphocholine(out). The enzyme catalyses a 1,2-diacyl-sn-glycero-3-phospho-L-serine(in) = a 1,2-diacyl-sn-glycero-3-phospho-L-serine(out). The catalysed reaction is a 1,2-diacyl-sn-glycero-3-phosphoethanolamine(in) = a 1,2-diacyl-sn-glycero-3-phosphoethanolamine(out). Its function is as follows. Lipid transfer protein required for autophagosome completion and peroxisome degradation. Tethers the edge of the isolation membrane (IM) to the endoplasmic reticulum (ER) and mediates direct lipid transfer from ER to IM for IM expansion. ATG2 binds to the ER exit site (ERES), which is the membrane source for autophagosome formation, using basic residues in its N-terminal region (NR) and to the expanding edge of the IM through its C-terminal region. The latter binding is assisted by an ATG18-PtdIns3P interaction. ATG2 then extracts phospholipids from the membrane source using its NR and transfers them to ATG9 to the IM through its predicted beta-sheet-rich structure for membrane expansion. The chain is Autophagy-related protein 2 (ATG2) from Scheffersomyces stipitis (strain ATCC 58785 / CBS 6054 / NBRC 10063 / NRRL Y-11545) (Yeast).